A 122-amino-acid polypeptide reads, in one-letter code: MTSPEIASLSWGQMKVKGSNTTYKDCKVWPGGSRTWDWRETGTEHSPGVQPADVKEVVEKGVQTLVIGRGMSEALKVPSSTVEYLKKHGIDVRVLQTEQAVKEYNALVAQGVRVGGVFHSTC.

The tract at residues 6–122 is MTH138-like domain; sequence IASLSWGQMK…RVGGVFHSTC (117 aa).

Belongs to the AAMDC family.

It localises to the cytoplasm. May play a role in preadipocyte differentiation and adipogenesis. This Homo sapiens (Human) protein is Mth938 domain-containing protein (AAMDC).